A 505-amino-acid chain; its full sequence is ATP synthase subunit alpha, chloroplastic (505 aa).

172–179 (GDRQTGKT) contacts ATP.

It belongs to the ATPase alpha/beta chains family. As to quaternary structure, F-type ATPases have 2 components, CF(1) - the catalytic core - and CF(0) - the membrane proton channel. CF(1) has five subunits: alpha(3), beta(3), gamma(1), delta(1), epsilon(1). CF(0) has four main subunits: a, b, b' and c.

It localises to the plastid. It is found in the chloroplast thylakoid membrane. It catalyses the reaction ATP + H2O + 4 H(+)(in) = ADP + phosphate + 5 H(+)(out). Functionally, produces ATP from ADP in the presence of a proton gradient across the membrane. The alpha chain is a regulatory subunit. This Antithamnion sp. (Red alga) protein is ATP synthase subunit alpha, chloroplastic.